Reading from the N-terminus, the 421-residue chain is MTADLLLTHFNQVFCPNDLGHPLFGAEMKEARVLEDGYIAVKDGKILAVGSGEPDASLIGPDTKIQSYEGKIATPGLIDCHTHLVYGGSREHEFAKKLAGVPYLEILAQGGGILSTVRATREASFENLYDKSKKLLDYMLLHGVTTVEAKSGYGLNWETEKRQLDVVGALDRDHEIDLVSTFMAAHAVPPEYKGRSQEYLELIVEEMLPRVKEENLAEFCDIFCEKGVFTADESRYLLSKAKEMGFKLRIHADEIESIGGVDVAAELGATSAEHLMMATDEGIRKMAEAKVIGNLLPATTFSLMEDTYAPARKMLEAGMAITLTTDSNPGSCPTANLQFVMQLGCFMMRLTPVEVLNAVTINAAYSVNRQDKIGSFDTGKQADITILDAKNIDYPLYFFATNLTHQVYKAGKLVVDQGRIV.

Residues His81 and His83 each coordinate Fe(3+). Zn(2+) contacts are provided by His81 and His83. Arg90, Tyr153, and His186 together coordinate 4-imidazolone-5-propanoate. Position 153 (Tyr153) interacts with N-formimidoyl-L-glutamate. A Fe(3+)-binding site is contributed by His251. A Zn(2+)-binding site is contributed by His251. Glu254 provides a ligand contact to 4-imidazolone-5-propanoate. Asp326 is a binding site for Fe(3+). A Zn(2+)-binding site is contributed by Asp326. N-formimidoyl-L-glutamate is bound by residues Asn328 and Gly330. Position 331 (Ser331) interacts with 4-imidazolone-5-propanoate.

The protein belongs to the metallo-dependent hydrolases superfamily. HutI family. The cofactor is Zn(2+). Requires Fe(3+) as cofactor.

The protein resides in the cytoplasm. The enzyme catalyses 4-imidazolone-5-propanoate + H2O = N-formimidoyl-L-glutamate. The protein operates within amino-acid degradation; L-histidine degradation into L-glutamate; N-formimidoyl-L-glutamate from L-histidine: step 3/3. Functionally, catalyzes the hydrolytic cleavage of the carbon-nitrogen bond in imidazolone-5-propanoate to yield N-formimidoyl-L-glutamate. It is the third step in the universal histidine degradation pathway. This Streptococcus gordonii (strain Challis / ATCC 35105 / BCRC 15272 / CH1 / DL1 / V288) protein is Imidazolonepropionase.